We begin with the raw amino-acid sequence, 368 residues long: DNA replication and repair protein RecF (368 aa).

30-37 (GKNGTGKT) contacts ATP.

Belongs to the RecF family.

The protein localises to the cytoplasm. The RecF protein is involved in DNA metabolism; it is required for DNA replication and normal SOS inducibility. RecF binds preferentially to single-stranded, linear DNA. It also seems to bind ATP. The chain is DNA replication and repair protein RecF from Chloroherpeton thalassium (strain ATCC 35110 / GB-78).